A 138-amino-acid polypeptide reads, in one-letter code: Putative transcriptional regulatory protein NedR (138 aa).

The segment at 1–25 is disordered; sequence MCWGRSWTFGRSSSKGWRPTSSASS. A compositionally biased stretch (polar residues) spans 9-25; that stretch reads FGRSSSKGWRPTSSASS.

May serve as a transcriptional regulator. This Micromonospora viridifaciens protein is Putative transcriptional regulatory protein NedR (nedR).